A 200-amino-acid polypeptide reads, in one-letter code: Small ribosomal subunit protein uS4 (200 aa).

The tract at residues 22 to 42 (TGKELEKRPYAPGPHGPGQRK) is disordered. The 64-residue stretch at 92–155 (ARLDNVVYKL…RNLSIIKESV (64 aa)) folds into the S4 RNA-binding domain.

The protein belongs to the universal ribosomal protein uS4 family. Part of the 30S ribosomal subunit. Contacts protein S5. The interaction surface between S4 and S5 is involved in control of translational fidelity.

One of the primary rRNA binding proteins, it binds directly to 16S rRNA where it nucleates assembly of the body of the 30S subunit. In terms of biological role, with S5 and S12 plays an important role in translational accuracy. This Bacillus velezensis (strain DSM 23117 / BGSC 10A6 / LMG 26770 / FZB42) (Bacillus amyloliquefaciens subsp. plantarum) protein is Small ribosomal subunit protein uS4.